The following is a 463-amino-acid chain: ATP-dependent protease ATPase subunit HslU (463 aa).

ATP contacts are provided by residues Ile-19 and 61-66 (GVGKTE). The tract at residues 154–174 (FGGAQNSSQTSDTQEDGEIEK) is disordered. ATP contacts are provided by Asp-277, Glu-341, and Arg-413.

It belongs to the ClpX chaperone family. HslU subfamily. In terms of assembly, a double ring-shaped homohexamer of HslV is capped on each side by a ring-shaped HslU homohexamer. The assembly of the HslU/HslV complex is dependent on binding of ATP.

The protein localises to the cytoplasm. Functionally, ATPase subunit of a proteasome-like degradation complex; this subunit has chaperone activity. The binding of ATP and its subsequent hydrolysis by HslU are essential for unfolding of protein substrates subsequently hydrolyzed by HslV. HslU recognizes the N-terminal part of its protein substrates and unfolds these before they are guided to HslV for hydrolysis. In Bacillus cereus (strain G9842), this protein is ATP-dependent protease ATPase subunit HslU.